The primary structure comprises 325 residues: Undecaprenyl-phosphate 4-deoxy-4-formamido-L-arabinose transferase (325 aa).

2 helical membrane passes run 234–254 and 269–289; these read LLSV…LLLI and VFML…GMGL.

It belongs to the glycosyltransferase 2 family.

The protein localises to the cell inner membrane. The enzyme catalyses UDP-4-deoxy-4-formamido-beta-L-arabinose + di-trans,octa-cis-undecaprenyl phosphate = 4-deoxy-4-formamido-alpha-L-arabinopyranosyl di-trans,octa-cis-undecaprenyl phosphate + UDP. Its pathway is glycolipid biosynthesis; 4-amino-4-deoxy-alpha-L-arabinose undecaprenyl phosphate biosynthesis; 4-amino-4-deoxy-alpha-L-arabinose undecaprenyl phosphate from UDP-4-deoxy-4-formamido-beta-L-arabinose and undecaprenyl phosphate: step 1/2. It participates in bacterial outer membrane biogenesis; lipopolysaccharide biosynthesis. Its function is as follows. Catalyzes the transfer of 4-deoxy-4-formamido-L-arabinose from UDP to undecaprenyl phosphate. The modified arabinose is attached to lipid A and is required for resistance to polymyxin and cationic antimicrobial peptides. This is Undecaprenyl-phosphate 4-deoxy-4-formamido-L-arabinose transferase from Erwinia tasmaniensis (strain DSM 17950 / CFBP 7177 / CIP 109463 / NCPPB 4357 / Et1/99).